Here is a 132-residue protein sequence, read N- to C-terminus: Precursor of CEP10 (132 aa).

The N-terminal stretch at 1–19 (MKLFIIIVVTSLTISKVFD) is a signal peptide. A propeptide spanning residues 20-66 (KTLVTIEARNLRKMDRHEHFNANEDFVEAKMLKKIDNKNNLNNRCIN) is cleaved from the precursor. A hydroxyproline mark is found at proline 70 and proline 73. A propeptide spanning residues 82-91 (PKVINNKFTK) is cleaved from the precursor. Hydroxyproline occurs at positions 95, 98, and 102. A propeptide spanning residues 107-116 (LRVVNNKFTN) is cleaved from the precursor. A hydroxyproline mark is found at proline 120, proline 123, and proline 127. A propeptide is located at residue proline 132.

It belongs to the C-terminally encoded plant signaling peptide (CEP) family. In terms of assembly, interacts with CEP receptors (e.g. CEPR1 and CEPR2). The mature small signaling peptide is generated by proteolytic processing of the longer precursor.

It localises to the secreted. The protein resides in the extracellular space. Its subcellular location is the apoplast. In terms of biological role, extracellular signaling peptide that may regulate primary root growth rate and systemic nitrogen (N)-demand signaling. This Arabidopsis thaliana (Mouse-ear cress) protein is Precursor of CEP10.